Consider the following 962-residue polypeptide: Phagocyte signaling-impaired protein (962 aa).

3 TPR repeats span residues 45 to 78 (LCARALKGLALLRLGRYEESHGCLQAVAEDKPTD), 79 to 112 (DSTLQVLSFCYREMEQLNKIVELYQHAVKKNPGN), and 523 to 560 (QIQLDSMGYVHCQLLPLCGRFSGARNSYDTTMKFFTNS). Residues 856-880 (TKVKKKQGDNKTQDTPQPVSEKERS) are disordered.

It belongs to the MDM20/NAA25 family. Component of the N-terminal acetyltransferase B (NatB) complex.

Its subcellular location is the lysosome. In terms of biological role, non-catalytic subunit of the NatB complex which catalyzes acetylation of the N-terminal methionine residues of proteins beginning with Met-Asp or Met-Glu. Has 2 roles in the larval immune response: required both for the phagocytic degradation of internalized bacteria and for the induction of Defensin in the fat body. Within the phagocytic blood cells, has a role in detection of infection and activation of the humoral immune response. The protein is Phagocyte signaling-impaired protein of Drosophila pseudoobscura pseudoobscura (Fruit fly).